The following is a 166-amino-acid chain: Ribosome maturation factor RimP (166 aa).

This sequence belongs to the RimP family.

The protein localises to the cytoplasm. Its function is as follows. Required for maturation of 30S ribosomal subunits. The sequence is that of Ribosome maturation factor RimP from Psychrobacter arcticus (strain DSM 17307 / VKM B-2377 / 273-4).